A 111-amino-acid chain; its full sequence is Cytochrome b-c1 complex subunit 7 (111 aa).

Ala2 carries the N-acetylalanine modification. Residue Lys12 is modified to N6-acetyllysine; alternate. Lys12 is subject to N6-succinyllysine; alternate. An N6-acetyllysine modification is found at Lys19. N6-acetyllysine; alternate is present on Lys78. Lys78 is modified (N6-succinyllysine; alternate). N6-acetyllysine occurs at positions 83 and 96.

This sequence belongs to the UQCRB/QCR7 family. As to quaternary structure, component of the ubiquinol-cytochrome c oxidoreductase (cytochrome b-c1 complex, complex III, CIII), a multisubunit enzyme composed of 11 subunits. The complex is composed of 3 respiratory subunits cytochrome b, cytochrome c1 and Rieske protein UQCRFS1, 2 core protein subunits UQCRC1/QCR1 and UQCRC2/QCR2, and 6 low-molecular weight protein subunits UQCRH/QCR6, UQCRB/QCR7, UQCRQ/QCR8, UQCR10/QCR9, UQCR11/QCR10 and subunit 9, the cleavage product of Rieske protein UQCRFS1. The complex exists as an obligatory dimer and forms supercomplexes (SCs) in the inner mitochondrial membrane with NADH-ubiquinone oxidoreductase (complex I, CI) and cytochrome c oxidase (complex IV, CIV), resulting in different assemblies (supercomplex SCI(1)III(2)IV(1) and megacomplex MCI(2)III(2)IV(2)).

It is found in the mitochondrion inner membrane. In terms of biological role, component of the ubiquinol-cytochrome c oxidoreductase, a multisubunit transmembrane complex that is part of the mitochondrial electron transport chain which drives oxidative phosphorylation. The respiratory chain contains 3 multisubunit complexes succinate dehydrogenase (complex II, CII), ubiquinol-cytochrome c oxidoreductase (cytochrome b-c1 complex, complex III, CIII) and cytochrome c oxidase (complex IV, CIV), that cooperate to transfer electrons derived from NADH and succinate to molecular oxygen, creating an electrochemical gradient over the inner membrane that drives transmembrane transport and the ATP synthase. The cytochrome b-c1 complex catalyzes electron transfer from ubiquinol to cytochrome c, linking this redox reaction to translocation of protons across the mitochondrial inner membrane, with protons being carried across the membrane as hydrogens on the quinol. In the process called Q cycle, 2 protons are consumed from the matrix, 4 protons are released into the intermembrane space and 2 electrons are passed to cytochrome c. The protein is Cytochrome b-c1 complex subunit 7 (UQCRB) of Homo sapiens (Human).